A 424-amino-acid chain; its full sequence is Glutamate-1-semialdehyde 2,1-aminomutase (424 aa).

Lys260 carries the post-translational modification N6-(pyridoxal phosphate)lysine.

Belongs to the class-III pyridoxal-phosphate-dependent aminotransferase family. HemL subfamily. Pyridoxal 5'-phosphate serves as cofactor.

Its subcellular location is the cytoplasm. The enzyme catalyses (S)-4-amino-5-oxopentanoate = 5-aminolevulinate. It functions in the pathway porphyrin-containing compound metabolism; protoporphyrin-IX biosynthesis; 5-aminolevulinate from L-glutamyl-tRNA(Glu): step 2/2. This is Glutamate-1-semialdehyde 2,1-aminomutase from Nitrosopumilus maritimus (strain SCM1).